The primary structure comprises 358 residues: MRKIIHIDMDCYFAAVEMRDFPEYRGKPLAVGGSSDRRGVISTCSYEARKFGVRSAMATAYAFKLCPDLILVPGRMQVYKEVSLQIREIFSRYTPLIEPLSLDEAYLDVSECQQYKGSATLIAQAIRRDILAETGLTASAGIAPVKFLAKVASDLNKPNGQYVITPETLPDFVKTLSLRKIPGVGKVTAEKLSSLGLNTCGDVQAYSKPELLARFGKFGGVLIERSQGIDERGISADRERKSVGVETTLAKDIYSLEQCQQVMPGLIQELALRLSRSAKERKIHKQVVKLKFNDFKQTTIEHRSDEVSIVMFYDLLAQAMARQEGRGIRLLGISVGLADSILAVPEIPNAQTQLDLAL.

The UmuC domain maps to 4–185; that stretch reads IIHIDMDCYF…LSLRKIPGVG (182 aa). Mg(2+) contacts are provided by D8 and D103. The active site involves E104.

The protein belongs to the DNA polymerase type-Y family. In terms of assembly, monomer. Requires Mg(2+) as cofactor.

The protein localises to the cytoplasm. The enzyme catalyses DNA(n) + a 2'-deoxyribonucleoside 5'-triphosphate = DNA(n+1) + diphosphate. Its function is as follows. Poorly processive, error-prone DNA polymerase involved in untargeted mutagenesis. Copies undamaged DNA at stalled replication forks, which arise in vivo from mismatched or misaligned primer ends. These misaligned primers can be extended by PolIV. Exhibits no 3'-5' exonuclease (proofreading) activity. May be involved in translesional synthesis, in conjunction with the beta clamp from PolIII. In Shewanella baltica (strain OS195), this protein is DNA polymerase IV.